A 298-amino-acid polypeptide reads, in one-letter code: DDRGK domain-containing protein 1 (298 aa).

Residues 1–2 (ME) are Lumenal-facing. The helical transmembrane segment at 3–23 (EIFALIVSMILIVAVIPLFFW) threads the bilayer. Over 24–298 (KRRRDARSRE…ISGMEEISVS (275 aa)) the chain is Cytoplasmic. A disordered region spans residues 31–155 (SREEVAEPPQ…EEEKARQAKE (125 aa)). Over residues 101-155 (KRQEREAQRQAEEATRESRNTKQDWYAEMRRKKDEEREAEELKLEEEEKARQAKE) the composition is skewed to basic and acidic residues.

It belongs to the DDRGK1 family.

It is found in the endoplasmic reticulum membrane. Functionally, substrate adapter for ufmylation, the covalent attachment of the ubiquitin-like modifier UFM1 to substrate proteins. This is DDRGK domain-containing protein 1 from Arabidopsis thaliana (Mouse-ear cress).